A 392-amino-acid polypeptide reads, in one-letter code: Cyclic di-GMP phosphodiesterase RocR (392 aa).

Residues 5 to 126 (NVLVLEDEPF…RITALLTRYN (122 aa)) form the Response regulatory domain. Asp56 carries the 4-aspartylphosphate modification. An EAL domain is found at 140 to 392 (ELPSVADVVR…QHFLDYCSGS (253 aa)). Residues Glu175, Asn233, Glu265, and Asp295 each coordinate Mg(2+). Glu352 acts as the Proton acceptor in catalysis.

In terms of assembly, homotetramer. Exhibits a highly unusual tetrameric structure arranged around a single dyad, with the four subunits adopting two distinctly different conformations, with only two active sites accessible for substrate binding. Interacts with RocS1. Mg(2+) is required as a cofactor.

It catalyses the reaction 3',3'-c-di-GMP + H2O = 5'-phosphoguanylyl(3'-&gt;5')guanosine + H(+). With respect to regulation, phosphorylation of Asp-56 probably induces local conformational changes in the response regulatory domain. These structural changes are transmitted to the adjacent EAL domain, then the signal is further transmitted down to the active site. The phosphodiesterase activity is inhibited by Ca(2+) and Zn(2+). Phosphodiesterase activity is inhibited by a benzoisothiazolinone derivative that specifically inhibited RocR, but not some other phosphodiesterases. Functionally, phosphodiesterase (PDE) that catalyzes the hydrolysis of cyclic diguanylate (c-di-GMP) to 5'-pGpG. Cannot use cyclic AMP or cyclic GMP. Part of the RocSAR two-component regulatory signaling system (also known as the SadARS system), which regulates biofilm maturation, type III secretion and expression of the cup fimbrial-gene cluster. Negatively regulates the expression of cup genes by antagonizing the activity of RocA1. This chain is Cyclic di-GMP phosphodiesterase RocR, found in Pseudomonas aeruginosa (strain ATCC 15692 / DSM 22644 / CIP 104116 / JCM 14847 / LMG 12228 / 1C / PRS 101 / PAO1).